The sequence spans 153 residues: Interleukin-4 (153 aa).

The signal sequence occupies residues 1-24 (MGLTSQLLPPLFFLLACAGNFAHG). Cystine bridges form between Cys-27-Cys-151, Cys-48-Cys-89, and Cys-70-Cys-123. A glycan (N-linked (GlcNAc...) asparagine) is linked at Asn-62.

Belongs to the IL-4/IL-13 family.

It localises to the secreted. Functionally, participates in at least several B-cell activation processes as well as of other cell types. It is a costimulator of DNA-synthesis. It induces the expression of class II MHC molecules on resting B-cells. It enhances both secretion and cell surface expression of IgE and IgG1. It also regulates the expression of the low affinity Fc receptor for IgE (CD23) on both lymphocytes and monocytes. Positively regulates IL31RA expression in macrophages. Stimulates autophagy in dendritic cells by interfering with mTORC1 signaling and through the induction of RUFY4. The polypeptide is Interleukin-4 (IL4) (Papio anubis (Olive baboon)).